The chain runs to 93 residues: MIKEVILMTNVEERIEQIIQVLREQVVQDTAVPRNIRRAAEQAIEALMNKEKEPAVRAADAIAILEEISEDPNMPLHTRTIIWEVLGALEQIK.

This sequence belongs to the UPF0147 family.

The sequence is that of UPF0147 protein PH1921.2 from Pyrococcus horikoshii (strain ATCC 700860 / DSM 12428 / JCM 9974 / NBRC 100139 / OT-3).